Reading from the N-terminus, the 280-residue chain is Pantothenate synthetase (280 aa).

30–37 (MGYLHEGH) contacts ATP. Residue H37 is the Proton donor of the active site. A (R)-pantoate-binding site is contributed by Q61. Residue Q61 participates in beta-alanine binding. Position 147–150 (147–150 (GQKD)) interacts with ATP. Q153 provides a ligand contact to (R)-pantoate. ATP is bound by residues V176 and 184-187 (MSSR).

This sequence belongs to the pantothenate synthetase family. Homodimer.

The protein resides in the cytoplasm. The enzyme catalyses (R)-pantoate + beta-alanine + ATP = (R)-pantothenate + AMP + diphosphate + H(+). The protein operates within cofactor biosynthesis; (R)-pantothenate biosynthesis; (R)-pantothenate from (R)-pantoate and beta-alanine: step 1/1. Catalyzes the condensation of pantoate with beta-alanine in an ATP-dependent reaction via a pantoyl-adenylate intermediate. In Fervidobacterium nodosum (strain ATCC 35602 / DSM 5306 / Rt17-B1), this protein is Pantothenate synthetase.